Reading from the N-terminus, the 257-residue chain is Triosephosphate isomerase, cytosolic (257 aa).

2 residues coordinate substrate: N10 and K12. H96 functions as the Electrophile in the catalytic mechanism. The active-site Proton acceptor is E167.

This sequence belongs to the triosephosphate isomerase family. As to quaternary structure, homodimer. Higher levels found in leaves than in roots.

The protein localises to the cytoplasm. It catalyses the reaction D-glyceraldehyde 3-phosphate = dihydroxyacetone phosphate. It functions in the pathway carbohydrate biosynthesis; gluconeogenesis. Its pathway is carbohydrate degradation; glycolysis; D-glyceraldehyde 3-phosphate from glycerone phosphate: step 1/1. The chain is Triosephosphate isomerase, cytosolic (TPI) from Stellaria longipes (Longstalk starwort).